The sequence spans 586 residues: 3-hydroxy-3-methylglutaryl-coenzyme A reductase 3 (586 aa).

The next 2 helical transmembrane spans lie at 36–59 (PSDYSLPLSLYLANALVFSLFFSV) and 87–107 (ALICLVASVIYLLGFFGIGFV). The tract at residues 108-170 (HSFSRASTDS…STTTTSTLSD (63 aa)) is linker. Catalytic regions lie at residues 171–586 (DDEQ…KITF) and 172–586 (DEQI…KITF). Catalysis depends on charge relay system residues E265, K397, and D473. The active-site Proton donor is the H571. N-linked (GlcNAc...) asparagine glycosylation is present at N575.

The protein belongs to the HMG-CoA reductase family.

It localises to the endoplasmic reticulum membrane. The protein localises to the mitochondrion membrane. Its subcellular location is the plastid membrane. It carries out the reaction (R)-mevalonate + 2 NADP(+) + CoA = (3S)-3-hydroxy-3-methylglutaryl-CoA + 2 NADPH + 2 H(+). It functions in the pathway metabolic intermediate biosynthesis; (R)-mevalonate biosynthesis; (R)-mevalonate from acetyl-CoA: step 3/3. In terms of biological role, catalyzes the synthesis of mevalonate. The specific precursor of all isoprenoid compounds present in plants. In Hevea brasiliensis (Para rubber tree), this protein is 3-hydroxy-3-methylglutaryl-coenzyme A reductase 3 (HMGR3).